Consider the following 150-residue polypeptide: L-alanine exporter AlaE (150 aa).

The next 4 helical transmembrane spans lie at 17 to 37, 48 to 68, 86 to 106, and 111 to 131; these read FAMV…VSGM, LSIP…DYVL, LVAY…TVGA, and IITA…LYGY.

Belongs to the AlaE exporter family.

It is found in the cell inner membrane. Its function is as follows. Exports L-alanine. In Vibrio cholerae serotype O1 (strain ATCC 39315 / El Tor Inaba N16961), this protein is L-alanine exporter AlaE.